The chain runs to 477 residues: Trigger factor (477 aa).

Positions 163–248 (ENLVIFDYKA…ITEVKKSEEV (86 aa)) constitute a PPIase FKBP-type domain. Residues 408–461 (KAKPSKKEISKEEAEKILKEHQKQDHNHEHDHNHDHDHPEEKKASKSTKIEKKP) are compositionally biased toward basic and acidic residues. The tract at residues 408-477 (KAKPSKKEIS…KPSTKKVSKK (70 aa)) is disordered.

It belongs to the FKBP-type PPIase family. Tig subfamily.

The protein localises to the cytoplasm. It carries out the reaction [protein]-peptidylproline (omega=180) = [protein]-peptidylproline (omega=0). Its function is as follows. Involved in protein export. Acts as a chaperone by maintaining the newly synthesized protein in an open conformation. Functions as a peptidyl-prolyl cis-trans isomerase. The chain is Trigger factor from Pelagibacter ubique (strain HTCC1062).